The following is a 432-amino-acid chain: Serine hydroxymethyltransferase (432 aa).

(6S)-5,6,7,8-tetrahydrofolate-binding positions include Leu-127 and 131–133 (GHL). N6-(pyridoxal phosphate)lysine is present on Lys-236.

It belongs to the SHMT family. As to quaternary structure, homodimer. Pyridoxal 5'-phosphate serves as cofactor.

Its subcellular location is the cytoplasm. The enzyme catalyses (6R)-5,10-methylene-5,6,7,8-tetrahydrofolate + glycine + H2O = (6S)-5,6,7,8-tetrahydrofolate + L-serine. The protein operates within one-carbon metabolism; tetrahydrofolate interconversion. It participates in amino-acid biosynthesis; glycine biosynthesis; glycine from L-serine: step 1/1. Its function is as follows. Catalyzes the reversible interconversion of serine and glycine with tetrahydrofolate (THF) serving as the one-carbon carrier. This reaction serves as the major source of one-carbon groups required for the biosynthesis of purines, thymidylate, methionine, and other important biomolecules. Also exhibits THF-independent aldolase activity toward beta-hydroxyamino acids, producing glycine and aldehydes, via a retro-aldol mechanism. The polypeptide is Serine hydroxymethyltransferase (Rhizobium etli (strain ATCC 51251 / DSM 11541 / JCM 21823 / NBRC 15573 / CFN 42)).